The chain runs to 1073 residues: Carbamoyl phosphate synthase large chain (1073 aa).

The segment at 1–403 (MPKRTDIKSI…SLQKALRGLE (403 aa)) is carboxyphosphate synthetic domain. R129, R169, G175, G176, E208, L210, E215, G241, V242, H243, Q285, and E299 together coordinate ATP. In terms of domain architecture, ATP-grasp 1 spans 133–328 (DKAMKSIGLA…IARVAAKLAV (196 aa)). Mg(2+) contacts are provided by Q285, E299, and N301. Mn(2+) contacts are provided by Q285, E299, and N301. The oligomerization domain stretch occupies residues 404–553 (VGVCGLDPKL…YSTYEEECEA (150 aa)). Residues 554–935 (NPSTRDKIMI…AFAKAQMGAS (382 aa)) form a carbamoyl phosphate synthetic domain region. An ATP-grasp 2 domain is found at 678-869 (QQMVERLNLR…LAMIAARVMA (192 aa)). Residues R714, H753, L755, E760, G785, V786, H787, S788, Q828, and E840 each coordinate ATP. Mg(2+)-binding residues include Q828, E840, and N842. Mn(2+)-binding residues include Q828, E840, and N842. One can recognise an MGS-like domain in the interval 936-1073 (EVLPTGGTAF…LQDLHAGLKA (138 aa)). The tract at residues 936 to 1073 (EVLPTGGTAF…LQDLHAGLKA (138 aa)) is allosteric domain.

Belongs to the CarB family. As to quaternary structure, composed of two chains; the small (or glutamine) chain promotes the hydrolysis of glutamine to ammonia, which is used by the large (or ammonia) chain to synthesize carbamoyl phosphate. Tetramer of heterodimers (alpha,beta)4. The cofactor is Mg(2+). Mn(2+) is required as a cofactor.

The enzyme catalyses hydrogencarbonate + L-glutamine + 2 ATP + H2O = carbamoyl phosphate + L-glutamate + 2 ADP + phosphate + 2 H(+). The catalysed reaction is hydrogencarbonate + NH4(+) + 2 ATP = carbamoyl phosphate + 2 ADP + phosphate + 2 H(+). It participates in amino-acid biosynthesis; L-arginine biosynthesis; carbamoyl phosphate from bicarbonate: step 1/1. It functions in the pathway pyrimidine metabolism; UMP biosynthesis via de novo pathway; (S)-dihydroorotate from bicarbonate: step 1/3. Functionally, large subunit of the glutamine-dependent carbamoyl phosphate synthetase (CPSase). CPSase catalyzes the formation of carbamoyl phosphate from the ammonia moiety of glutamine, carbonate, and phosphate donated by ATP, constituting the first step of 2 biosynthetic pathways, one leading to arginine and/or urea and the other to pyrimidine nucleotides. The large subunit (synthetase) binds the substrates ammonia (free or transferred from glutamine from the small subunit), hydrogencarbonate and ATP and carries out an ATP-coupled ligase reaction, activating hydrogencarbonate by forming carboxy phosphate which reacts with ammonia to form carbamoyl phosphate. The protein is Carbamoyl phosphate synthase large chain of Pseudomonas syringae pv. tomato (strain ATCC BAA-871 / DC3000).